Consider the following 115-residue polypeptide: MNAFLLSALCLLGAWAALAGGVTVQDGNFSFSLESVKKLKDLQEPQEPRVGKLRNFAPIPGEPVVPILCSNPNFPEELKPLCKEPNAQEILQRLEEIAEDPGTCEICAYAACTGC.

An N-terminal signal peptide occupies residues 1–21; sequence MNAFLLSALCLLGAWAALAGG. 3 cysteine pairs are disulfide-bonded: C69/C82, C104/C112, and C107/C115.

Belongs to the guanylin family. Highly expressed in ileum and colon. Found in plasma.

Its subcellular location is the secreted. Functionally, endogenous activator of intestinal guanylate cyclase. It stimulates this enzyme through the same receptor binding region as the heat-stable enterotoxins. The sequence is that of Guanylin (GUCA2A) from Homo sapiens (Human).